A 2460-amino-acid polypeptide reads, in one-letter code: Reducing polyketide synthase BOA6 (2460 aa).

One can recognise a Ketosynthase family 3 (KS3) domain in the interval 5–438 (NEPIAVIGTG…GTNAHAILES (434 aa)). Catalysis depends on for beta-ketoacyl synthase activity residues C178, H317, and H360. Residues 549-864 (VFTGQGAQWP…PYTGVLSRGD (316 aa)) form a malonyl-CoA:ACP transacylase (MAT) domain region. Positions 938-1073 (HELLGVRCAD…GRIKMTLGTP (136 aa)) are N-terminal hotdog fold. The tract at residues 938 to 1244 (HELLGVRCAD…QMQSFTAARP (307 aa)) is dehydratase (DH) domain. Positions 938–1245 (HELLGVRCAD…MQSFTAARPS (308 aa)) constitute a PKS/mFAS DH domain. H970 acts as the Proton acceptor; for dehydratase activity in catalysis. The interval 1088–1245 (LGPLNVDRFY…MQSFTAARPS (158 aa)) is C-terminal hotdog fold. D1145 functions as the Proton donor; for dehydratase activity in the catalytic mechanism. Residues 1399-1586 (NKFVTAAMKK…VNDFKDKSRY (188 aa)) form a methyltransferase (MT) domain region. Positions 2098–2266 (SYLLAGLTGD…KRGGVASVIH (169 aa)) are ketoreductase (KR) domain. In terms of domain architecture, Carrier spans 2378–2456 (DEVLGVMQKC…DLCELACEEY (79 aa)). An O-(pantetheine 4'-phosphoryl)serine modification is found at S2416.

Its pathway is polyketide biosynthesis. In terms of biological role, reducing polyketide synthase; part of the gene cluster A that mediates the biosynthesis of botcinic acid and its botcinin derivatives, acetate-derived polyketides that contribute to virulence when combined with the sesquiterpene botrydial. Botcinic acid and its derivatives have been shown to induce chlorosis and necrosis during host plant infection, but also have antifungal activities. Two polyketide synthases, BOA6 and BOA9, are involved in the biosynthesis of botcinins. BOA6 mediates the formation of the per-methylated tetraketide core by condensation of four units of malonyl-CoA with one unit of acetyl-CoA, which would be methylated in activated methylene groups to yield a bicyclic acid intermediate that could then either be converted to botrylactone derivatives or lose the starter acetate unit through a retro-Claisen type C-C bond cleavage to yield botcinin derivatives. The second polyketide synthase, BOA9, is probably required for the biosynthesis of the tetraketide side chain of botcinins. The methyltransferase (MT) domain within BOA6 is probably responsible for the incorporation of four methyl groups. The trans-enoyl reductase BOA5 might take over the enoyl reductase function of BOA6 that misses an ER domain. The monooxygenases BOA2, BOA3 and BOA4 might be involved in further hydroxylations at C4, C5 and C8, whereas BOA7, close to BOA9, could potentially be involved in the hydroxylation at C4 in the side chain of botcinins. In Botryotinia fuckeliana (strain B05.10) (Noble rot fungus), this protein is Reducing polyketide synthase BOA6.